The chain runs to 187 residues: Ribosome maturation factor RimP (187 aa).

The protein belongs to the RimP family.

The protein resides in the cytoplasm. Its function is as follows. Required for maturation of 30S ribosomal subunits. The protein is Ribosome maturation factor RimP of Phenylobacterium zucineum (strain HLK1).